A 363-amino-acid chain; its full sequence is S-adenosylmethionine:tRNA ribosyltransferase-isomerase (363 aa).

It belongs to the QueA family. In terms of assembly, monomer.

It is found in the cytoplasm. It catalyses the reaction 7-aminomethyl-7-carbaguanosine(34) in tRNA + S-adenosyl-L-methionine = epoxyqueuosine(34) in tRNA + adenine + L-methionine + 2 H(+). It participates in tRNA modification; tRNA-queuosine biosynthesis. Transfers and isomerizes the ribose moiety from AdoMet to the 7-aminomethyl group of 7-deazaguanine (preQ1-tRNA) to give epoxyqueuosine (oQ-tRNA). The chain is S-adenosylmethionine:tRNA ribosyltransferase-isomerase from Haemophilus influenzae (strain PittEE).